We begin with the raw amino-acid sequence, 215 residues long: MTQTLADMRRDYTRDGLTEAQSPDEPFALFHTWFDDAVKTEQPPVEANAMTLATVDEQGRPHCRVLLLKGLDTQGFTFFTNYESAKGQQLAARPFAAMTFFWPTLERQVRIEGRVEKVSAQESDAYYQVRPLGSRLGAWASPQSRVIADRDELEGLIRQTEQRFADTQPHCPEHWGGYRLLPERIEFWQGRSSRLHDRLNYRSVDGRWTRERLAP.

Substrate is bound by residues 9–12 (RRDY) and Lys69. FMN is bound by residues 64–69 (RVLLLK), 79–80 (FT), Lys86, and Gln108. Residues Tyr126, Arg130, and Ser134 each coordinate substrate. Residues 143 to 144 (QS) and Trp188 each bind FMN. Residue 194–196 (RLH) coordinates substrate. Arg198 lines the FMN pocket.

It belongs to the pyridoxamine 5'-phosphate oxidase family. In terms of assembly, homodimer. FMN serves as cofactor.

The enzyme catalyses pyridoxamine 5'-phosphate + O2 + H2O = pyridoxal 5'-phosphate + H2O2 + NH4(+). The catalysed reaction is pyridoxine 5'-phosphate + O2 = pyridoxal 5'-phosphate + H2O2. It functions in the pathway cofactor metabolism; pyridoxal 5'-phosphate salvage; pyridoxal 5'-phosphate from pyridoxamine 5'-phosphate: step 1/1. Its pathway is cofactor metabolism; pyridoxal 5'-phosphate salvage; pyridoxal 5'-phosphate from pyridoxine 5'-phosphate: step 1/1. In terms of biological role, catalyzes the oxidation of either pyridoxine 5'-phosphate (PNP) or pyridoxamine 5'-phosphate (PMP) into pyridoxal 5'-phosphate (PLP). This chain is Pyridoxine/pyridoxamine 5'-phosphate oxidase, found in Pseudomonas savastanoi pv. phaseolicola (strain 1448A / Race 6) (Pseudomonas syringae pv. phaseolicola (strain 1448A / Race 6)).